Reading from the N-terminus, the 260-residue chain is Kallikrein-8 (260 aa).

Positions 1-28 (MGRPPPCAIQPWILLLLFMGAWAGLTRA) are cleaved as a signal peptide. Residues 29 to 32 (QGSK) constitute a propeptide that is removed on maturation. In terms of domain architecture, Peptidase S1 spans 33–257 (ILEGRECIPH…YTTWIKKTMD (225 aa)). Cystine bridges form between C39–C173, C58–C74, C145–C246, C152–C218, C184–C198, and C208–C233. The active-site Charge relay system is the H73. A glycan (N-linked (GlcNAc...) asparagine) is linked at N110. The Charge relay system role is filled by D120. The active-site Charge relay system is S212.

The protein belongs to the peptidase S1 family. Kallikrein subfamily. As to quaternary structure, interacts with SPINK9. In terms of tissue distribution, expressed in the limbic system of mouse brain and is localized at highest concentration in pyramidal neurons of the hippocampal CA1-3 subfields. Also detected in spinal cord gray matter and in keratinized stratified epithelia of epidermis, hair, tongue, palate, nasal cavity, pharynges, esophagus and forestomach. In skin and mucus membranes, expressed in stratum spinosum and stratum granulosum. Expressed during estrus in vaginal epithelial cells but not stromal cells. Within the vaginal epithelium, expressed in prickle cells, granular cells and parakeratotic cells but not in basal cells. Not expressed in uterus. Expressed in the keratinocytes.

It localises to the secreted. The protein localises to the cytoplasm. It catalyses the reaction Cleavage of amide substrates following the basic amino acids Arg or Lys at the P1 position, with a preference for Arg over Lys.. Its activity is regulated as follows. Strongly inhibited by diisopropyl fluorophosphate, leupeptin and (4-amidinophenyl)methanesulfonyl 1-fluoride. Functionally, serine protease which is capable of degrading a number of proteins such as casein, fibrinogen, kininogen, fibronectin and collagen type IV. Also cleaves L1CAM in response to increased neural activity. Induces neurite outgrowth and fasciculation of cultured hippocampal neurons. Plays a role in the formation and maturation of orphan and small synaptic boutons in the Schaffer-collateral pathway, regulates Schaffer-collateral long-term potentiation in the hippocampus and is required for memory acquisition and synaptic plasticity. Involved in skin desquamation and keratinocyte proliferation. Plays a role in the secondary phase of pathogenesis following spinal cord injury. This Mus musculus (Mouse) protein is Kallikrein-8 (Klk8).